Reading from the N-terminus, the 198-residue chain is Recombination protein RecR (198 aa).

The C4-type zinc-finger motif lies at Cys57 to Cys72. One can recognise a Toprim domain in the interval Thr80–Pro175.

Belongs to the RecR family.

May play a role in DNA repair. It seems to be involved in an RecBC-independent recombinational process of DNA repair. It may act with RecF and RecO. The protein is Recombination protein RecR of Paraburkholderia xenovorans (strain LB400).